The following is a 300-amino-acid chain: UDP-N-acetylenolpyruvoylglucosamine reductase (300 aa).

The FAD-binding PCMH-type domain occupies 27–216; the sequence is RVGGPADVIF…TERREKTQPI (190 aa). The active site involves Arg-172. Residue Ser-223 is the Proton donor of the active site. Glu-293 is a catalytic residue.

This sequence belongs to the MurB family. The cofactor is FAD.

It localises to the cytoplasm. The catalysed reaction is UDP-N-acetyl-alpha-D-muramate + NADP(+) = UDP-N-acetyl-3-O-(1-carboxyvinyl)-alpha-D-glucosamine + NADPH + H(+). The protein operates within cell wall biogenesis; peptidoglycan biosynthesis. In terms of biological role, cell wall formation. This chain is UDP-N-acetylenolpyruvoylglucosamine reductase, found in Phenylobacterium zucineum (strain HLK1).